The primary structure comprises 60 residues: Ribosome-inactivating protein dianthin-32 (60 aa).

This sequence belongs to the ribosome-inactivating protein family. Type 1 RIP subfamily.

The enzyme catalyses Endohydrolysis of the N-glycosidic bond at one specific adenosine on the 28S rRNA.. Functionally, single-chain ribosome-inactivating protein. The chain is Ribosome-inactivating protein dianthin-32 from Dianthus caryophyllus (Carnation).